Consider the following 232-residue polypeptide: Chalcone synthase (232 aa).

Cys7 is an active-site residue.

Belongs to the thiolase-like superfamily. Chalcone/stilbene synthases family.

The catalysed reaction is (E)-4-coumaroyl-CoA + 3 malonyl-CoA + 3 H(+) = 2',4,4',6'-tetrahydroxychalcone + 3 CO2 + 4 CoA. The protein operates within secondary metabolite biosynthesis; flavonoid biosynthesis. In terms of biological role, the primary product of this enzyme is 4,2',4',6'-tetrahydroxychalcone (also termed naringenin-chalcone or chalcone) which can under specific conditions spontaneously isomerize into naringenin. The protein is Chalcone synthase (CHS) of Malus domestica (Apple).